The chain runs to 288 residues: Probable prolyl 4-hydroxylase 6 (288 aa).

Residues 1–4 lie on the Cytoplasmic side of the membrane; sequence MDSQ. A helical; Signal-anchor for type II membrane protein membrane pass occupies residues 5–27; sequence YFLAFSLSLLLIFSQISSFSFSV. Residues 28–288 lie on the Lumenal side of the membrane; it reads DPTRITQLSW…GFCRKSCKAC (261 aa). Residues 116-238 enclose the Fe2OG dioxygenase domain; it reads NGEALQILHY…KWSATRWIHV (123 aa). Positions 134 and 136 each coordinate Fe cation. N-linked (GlcNAc...) asparagine glycosylation is found at Asn-160 and Asn-210. His-219 lines the Fe cation pocket. Residue Lys-229 coordinates 2-oxoglutarate. Positions 248–288 constitute a ShKT domain; sequence CVDDHESCQEWADAGECEKNPMYMVGSETSLGFCRKSCKAC. Intrachain disulfides connect Cys-248-Cys-288, Cys-255-Cys-281, and Cys-264-Cys-285.

This sequence belongs to the P4HA family. Fe(2+) is required as a cofactor. L-ascorbate serves as cofactor.

The protein resides in the endoplasmic reticulum membrane. The catalysed reaction is L-prolyl-[collagen] + 2-oxoglutarate + O2 = trans-4-hydroxy-L-prolyl-[collagen] + succinate + CO2. Catalyzes the post-translational formation of 4-hydroxyproline in -Xaa-Pro-Gly- sequences in proline-rich peptide sequences of plant glycoproteins and other proteins. Hydroxyprolines are important constituent of many plant cell wall glycoproteins such as extensins, hydroxyproline-rich glycoproteins, lectins and arabinogalactan proteins. The protein is Probable prolyl 4-hydroxylase 6 of Arabidopsis thaliana (Mouse-ear cress).